Reading from the N-terminus, the 179-residue chain is 5'-deoxynucleotidase VV1_0013 (179 aa).

His-53 serves as a coordination point for a divalent metal cation. Substrate contacts are provided by residues Asp-62–Thr-65 and Asp-122. Asp-122 provides a ligand contact to a divalent metal cation.

This sequence belongs to the 5DNU family. In terms of assembly, homodimer. The cofactor is a divalent metal cation.

Its subcellular location is the cytoplasm. It catalyses the reaction a 2'-deoxyribonucleoside 5'-phosphate + H2O = a 2'-deoxyribonucleoside + phosphate. Functionally, catalyzes the strictly specific dephosphorylation of 2'-deoxyribonucleoside 5'-monophosphates. The protein is 5'-deoxynucleotidase VV1_0013 of Vibrio vulnificus (strain CMCP6).